Here is a 630-residue protein sequence, read N- to C-terminus: uncharacterized protein (630 aa).

2 helical membrane passes run 8 to 28 (LFNM…ASAV) and 258 to 278 (VDNS…PLVI). The interval 399–426 (EETSKPTEQPSPADSTSTPAAPEKGAAS) is disordered. The span at 404–417 (PTEQPSPADSTSTP) shows a compositional bias: polar residues.

The protein belongs to the peptidase S1C family.

It localises to the cell membrane. This is an uncharacterized protein from Sinorhizobium fredii (strain NBRC 101917 / NGR234).